Here is a 212-residue protein sequence, read N- to C-terminus: MSYIVALTGGICSGKSVVAKKFSNLSKKVSVIDADVISKNITQPGSIALRMITKHFGPHILFSNGSLNRSMLKKIIFFNPKDKEWLEQLLHPLIRKETQKTINILSNRSSYILWVVPLLIENNLQKYADHILMIDVHVDIQLNRIISRDKIHKQYAENILLSQVSRQHRLNYADNVIENNKSIDGMTQHIHNLHRDYLKAEKTTTKKTIFSK.

In terms of domain architecture, DPCK spans 4 to 204 (IVALTGGICS…RDYLKAEKTT (201 aa)). 12–17 (CSGKSV) is an ATP binding site.

This sequence belongs to the CoaE family.

It is found in the cytoplasm. The catalysed reaction is 3'-dephospho-CoA + ATP = ADP + CoA + H(+). It participates in cofactor biosynthesis; coenzyme A biosynthesis; CoA from (R)-pantothenate: step 5/5. In terms of biological role, catalyzes the phosphorylation of the 3'-hydroxyl group of dephosphocoenzyme A to form coenzyme A. The protein is Dephospho-CoA kinase of Blochmanniella pennsylvanica (strain BPEN).